Reading from the N-terminus, the 511-residue chain is Glucans biosynthesis protein G (511 aa).

The N-terminal stretch at 1–22 (MMKMRWLSAAVMLTLYTSSSWA) is a signal peptide.

The protein belongs to the OpgD/OpgG family.

It is found in the periplasm. The protein operates within glycan metabolism; osmoregulated periplasmic glucan (OPG) biosynthesis. In terms of biological role, involved in the biosynthesis of osmoregulated periplasmic glucans (OPGs). This chain is Glucans biosynthesis protein G, found in Shigella dysenteriae serotype 1 (strain Sd197).